The chain runs to 123 residues: Large ribosomal subunit protein uL24 (123 aa).

This sequence belongs to the universal ribosomal protein uL24 family. Part of the 50S ribosomal subunit.

In terms of biological role, one of two assembly initiator proteins, it binds directly to the 5'-end of the 23S rRNA, where it nucleates assembly of the 50S subunit. Located at the polypeptide exit tunnel on the outside of the subunit. The sequence is that of Large ribosomal subunit protein uL24 from Pyrobaculum aerophilum (strain ATCC 51768 / DSM 7523 / JCM 9630 / CIP 104966 / NBRC 100827 / IM2).